A 554-amino-acid chain; its full sequence is CTP synthase (554 aa).

The segment at 1-265 (MTPLIFVTGG…DEIVVNQLKL (265 aa)) is amidoligase domain. Position 13 (Ser13) interacts with CTP. Ser13 serves as a coordination point for UTP. An ATP-binding site is contributed by 14 to 19 (SLGKGI). Mg(2+) is bound by residues Asp71 and Glu139. CTP is bound by residues 146–148 (DIE), 186–191 (KTKPTQ), and Lys222. UTP is bound by residues 186–191 (KTKPTQ) and Lys222. The region spanning 292 to 545 (TIAVVGKYVD…IRAARERKAG (254 aa)) is the Glutamine amidotransferase type-1 domain. Gly353 is an L-glutamine binding site. The active-site Nucleophile; for glutamine hydrolysis is the Cys380. L-glutamine-binding positions include 381–384 (YGMQ), Glu404, and Arg471. Active-site residues include His518 and Glu520.

This sequence belongs to the CTP synthase family. In terms of assembly, homotetramer.

The enzyme catalyses UTP + L-glutamine + ATP + H2O = CTP + L-glutamate + ADP + phosphate + 2 H(+). The catalysed reaction is L-glutamine + H2O = L-glutamate + NH4(+). It carries out the reaction UTP + NH4(+) + ATP = CTP + ADP + phosphate + 2 H(+). It participates in pyrimidine metabolism; CTP biosynthesis via de novo pathway; CTP from UDP: step 2/2. With respect to regulation, allosterically activated by GTP, when glutamine is the substrate; GTP has no effect on the reaction when ammonia is the substrate. The allosteric effector GTP functions by stabilizing the protein conformation that binds the tetrahedral intermediate(s) formed during glutamine hydrolysis. Inhibited by the product CTP, via allosteric rather than competitive inhibition. Functionally, catalyzes the ATP-dependent amination of UTP to CTP with either L-glutamine or ammonia as the source of nitrogen. Regulates intracellular CTP levels through interactions with the four ribonucleotide triphosphates. This chain is CTP synthase, found in Stenotrophomonas maltophilia (strain K279a).